A 224-amino-acid polypeptide reads, in one-letter code: MFPKINTIDPYISLRLFEVKPKYVGYSSVDARNQSFAIHDIKDYEKFSNAGLFYTSPTEITCYCCGMKFCNWLYEKHPLQVHGFWSRNCGFMRATLGIIGLKKMIDSYNDYYNNEVFVKHKNRVYTHKKLEDMGFSKPFMQFILANAFIPPYRKYIHKIILNDRYFTFKFAAHLLSFHKVNLDNQTTYCMTCGIEPIKKDENFCNACKTLNYKHYKTLNFSVKL.

A BIR repeat occupies 29-92 (VDARNQSFAI…GFWSRNCGFM (64 aa)). 4 residues coordinate Zn(2+): C62, C65, H82, and C89.

Not essential for growth or virulence. Does not have antiapoptotic function. The protein is IAP-like protein p27 (p27) of Ornithodoros (relapsing fever ticks).